The sequence spans 98 residues: NADH-ubiquinone oxidoreductase chain 4L (98 aa).

Transmembrane regions (helical) follow at residues 2–22 (TQASTNILLAFFFSLLGTLIF), 29–49 (TLLCLEGMMLTLFIMSTMTAL), and 61–81 (IVMLVFAACEAAIGLALLAMI).

The protein belongs to the complex I subunit 4L family. In terms of assembly, core subunit of respiratory chain NADH dehydrogenase (Complex I) which is composed of 45 different subunits.

The protein resides in the mitochondrion inner membrane. The enzyme catalyses a ubiquinone + NADH + 5 H(+)(in) = a ubiquinol + NAD(+) + 4 H(+)(out). In terms of biological role, core subunit of the mitochondrial membrane respiratory chain NADH dehydrogenase (Complex I) which catalyzes electron transfer from NADH through the respiratory chain, using ubiquinone as an electron acceptor. Part of the enzyme membrane arm which is embedded in the lipid bilayer and involved in proton translocation. This chain is NADH-ubiquinone oxidoreductase chain 4L (MT-ND4L), found in Calomys musculinus (Drylands vesper mouse).